Consider the following 545-residue polypeptide: MAHACARGVVAPAPSRVSPRVSGRRVVVARVGTSSAEASAKEAPKKSEAKGANEVQFEAVIGIETHVQINSNTKAFCRCAAVYGAEPNRHTCPVCLGHPGTYPILNAAVVKKAIALGIGLDCSVIRRKSTFDRKQYFYPDLPKGYQISQFDEPYGEHGKLDVVIPVEDGGGVRTIGITRAHIEEDAGKLTHFPAKGNEPGYALADYNRAGVALVEIVSEPDLRTGREVAAYGAELRRLVRYLDVSDGNLSEGSMRCDVNVSVRPVGREAFGTKVEVKNMNSFNAMSRAVDFEIERQTTLIRDGRGDEIVQETRTWDEGRQRTVSMRKKEGLADYRYFPEPDLPPLVFDNAYVDGVKAEMPELPAAIRARYAALGLPDDAVQVLVEDKALVEYFDATIAAGAPAKQAANWLTGDIMAYLKNAKDVTISTMPLRSKDLAEFCSMIENGEISGKIGKDILPDLLVGETGGAGPRAIVEERGLSQISDPAEIEAIVDKVLEENPGQLEQYRGGKDKLKGFFVGKVLAASGGRANPALSNQILMKKLAGE.

Belongs to the GatB/GatE family. GatB subfamily. In terms of assembly, subunit of the heterotrimeric GatCAB amidotransferase (AdT) complex, composed of A, B and C subunits.

The protein resides in the mitochondrion. It localises to the plastid. The protein localises to the chloroplast. It carries out the reaction L-glutamyl-tRNA(Gln) + L-glutamine + ATP + H2O = L-glutaminyl-tRNA(Gln) + L-glutamate + ADP + phosphate + H(+). Allows the formation of correctly charged Gln-tRNA(Gln) through the transamidation of misacylated Glu-tRNA(Gln) in chloroplasts and mitochondria. The reaction takes place in the presence of glutamine and ATP through an activated gamma-phospho-Glu-tRNA(Gln). In Micromonas pusilla (strain CCMP1545) (Picoplanktonic green alga), this protein is Glutamyl-tRNA(Gln) amidotransferase subunit B-1, chloroplastic/mitochondrial.